The primary structure comprises 51 residues: Insulin (51 aa).

Cystine bridges form between Cys7-Cys37, Cys19-Cys50, and Cys36-Cys41.

The protein belongs to the insulin family. As to quaternary structure, heterodimer of a B chain and an A chain linked by two disulfide bonds.

Its subcellular location is the secreted. Functionally, insulin decreases blood glucose concentration. It increases cell permeability to monosaccharides, amino acids and fatty acids. It accelerates glycolysis, the pentose phosphate cycle, and glycogen synthesis in liver. In Anguilla rostrata (American eel), this protein is Insulin (ins).